A 921-amino-acid polypeptide reads, in one-letter code: TRPM8 channel-associated factor 1 (921 aa).

A Peptidase M60 domain is found at 542 to 841 (YCWMSTGLYI…TYLQLQEAFG (300 aa)).

The protein belongs to the TCAF family. Interacts with TRPM8 (via N-terminus and C-terminus domains); the interaction inhibits TRPM8 channel activity. Interacts with TRPV6.

The protein resides in the cell membrane. Its function is as follows. Positively regulates the plasma membrane cation channel TRPM8 activity. Involved in the recruitment of TRPM8 to the cell surface. Promotes prostate cancer cell migration inhibition in a TRPM8-dependent manner. This Bos taurus (Bovine) protein is TRPM8 channel-associated factor 1.